We begin with the raw amino-acid sequence, 378 residues long: Anhydro-N-acetylmuramic acid kinase (378 aa).

22–29 is a binding site for ATP; it reads GTSLDGAD.

It belongs to the anhydro-N-acetylmuramic acid kinase family.

The catalysed reaction is 1,6-anhydro-N-acetyl-beta-muramate + ATP + H2O = N-acetyl-D-muramate 6-phosphate + ADP + H(+). Its pathway is amino-sugar metabolism; 1,6-anhydro-N-acetylmuramate degradation. The protein operates within cell wall biogenesis; peptidoglycan recycling. In terms of biological role, catalyzes the specific phosphorylation of 1,6-anhydro-N-acetylmuramic acid (anhMurNAc) with the simultaneous cleavage of the 1,6-anhydro ring, generating MurNAc-6-P. Is required for the utilization of anhMurNAc either imported from the medium or derived from its own cell wall murein, and thus plays a role in cell wall recycling. The polypeptide is Anhydro-N-acetylmuramic acid kinase (Bordetella petrii (strain ATCC BAA-461 / DSM 12804 / CCUG 43448)).